A 407-amino-acid chain; its full sequence is Na(+)-translocating NADH-quinone reductase subunit F (407 aa).

Residues 3 to 23 (IILGVVMFTLIVLALTVMILF) traverse the membrane as a helical segment. Positions 32–126 (GDITVEINED…NLKIELPEEI (95 aa)) constitute a 2Fe-2S ferredoxin-type domain. The [2Fe-2S] cluster site is built by cysteine 69, cysteine 75, cysteine 78, and cysteine 110. The region spanning 129–269 (VKKWTCEVIS…SGPFGEFFAK (141 aa)) is the FAD-binding FR-type domain.

This sequence belongs to the NqrF family. Composed of six subunits; NqrA, NqrB, NqrC, NqrD, NqrE and NqrF. Requires [2Fe-2S] cluster as cofactor. FAD is required as a cofactor.

The protein resides in the cell inner membrane. It carries out the reaction a ubiquinone + n Na(+)(in) + NADH + H(+) = a ubiquinol + n Na(+)(out) + NAD(+). Functionally, NQR complex catalyzes the reduction of ubiquinone-1 to ubiquinol by two successive reactions, coupled with the transport of Na(+) ions from the cytoplasm to the periplasm. The first step is catalyzed by NqrF, which accepts electrons from NADH and reduces ubiquinone-1 to ubisemiquinone by a one-electron transfer pathway. In Yersinia pseudotuberculosis serotype O:1b (strain IP 31758), this protein is Na(+)-translocating NADH-quinone reductase subunit F.